Here is a 342-residue protein sequence, read N- to C-terminus: Surface presentation of antigens protein SpaS (342 aa).

The next 6 helical transmembrane spans lie at 28-48 (LTTVVIILVGTFTIISFFSLS), 70-90 (FFAVVIVFFKIIGFPLFFCVL), 133-153 (EFFKSILLLIILALTTYFFWI), 158-178 (IIFSQVFSSVDGLYLIWGRLF), 181-201 (IILFFLAFSILVIILDFVIEF), and 260-280 (HIAIGIYFNPEIAPAPFISLI).

Belongs to the type III secretion exporter family.

It localises to the cell inner membrane. Required for surface presentation of invasion plasmid antigens. Could play a role in preserving the translocation competence of the ipa antigens. Required for invasion and for secretion of the three ipa proteins. This is Surface presentation of antigens protein SpaS (spaS) from Shigella flexneri.